Here is a 481-residue protein sequence, read N- to C-terminus: UDP-N-acetylmuramate--L-alanine ligase (481 aa).

122 to 128 (GVHGKTT) provides a ligand contact to ATP.

This sequence belongs to the MurCDEF family.

It is found in the cytoplasm. The enzyme catalyses UDP-N-acetyl-alpha-D-muramate + L-alanine + ATP = UDP-N-acetyl-alpha-D-muramoyl-L-alanine + ADP + phosphate + H(+). The protein operates within cell wall biogenesis; peptidoglycan biosynthesis. Its function is as follows. Cell wall formation. This chain is UDP-N-acetylmuramate--L-alanine ligase, found in Treponema pallidum (strain Nichols).